A 116-amino-acid chain; its full sequence is Promotilin (116 aa).

Residues 1–25 (MVSRKAVAVLLMVHVAVMLASQTEA) form the signal peptide. Positions 39–74 (REKERNKGQKKSLIVQQRSEEVGPLDPVEPPEEEEN) are disordered.

The protein belongs to the motilin family.

The protein localises to the secreted. In terms of biological role, plays an important role in the regulation of interdigestive gastrointestinal motility and indirectly causes rhythmic contraction of duodenal and colonic smooth muscle. This is Promotilin (MLN) from Felis catus (Cat).